A 164-amino-acid chain; its full sequence is Lipocalin-like 1 protein (164 aa).

This sequence belongs to the calycin superfamily. Lipocalin family.

The protein is Lipocalin-like 1 protein (LCNL1) of Homo sapiens (Human).